Reading from the N-terminus, the 408-residue chain is Elongation factor Tu, chloroplastic (408 aa).

In terms of domain architecture, tr-type G spans 10-214 (KPHVNIGTIG…AVDSYIPTPK (205 aa)). Residues 19 to 26 (GHVDHGKT) are G1. 19 to 26 (GHVDHGKT) is a binding site for GTP. Residue T26 coordinates Mg(2+). The G2 stretch occupies residues 60–64 (GITIN). Residues 81–84 (DCPG) are G3. GTP-binding positions include 81–85 (DCPGH) and 136–139 (NKED). The G4 stretch occupies residues 136–139 (NKED). The interval 174-176 (SAL) is G5.

The protein belongs to the TRAFAC class translation factor GTPase superfamily. Classic translation factor GTPase family. EF-Tu/EF-1A subfamily.

The protein localises to the plastid. It is found in the chloroplast. It carries out the reaction GTP + H2O = GDP + phosphate + H(+). Functionally, GTP hydrolase that promotes the GTP-dependent binding of aminoacyl-tRNA to the A-site of ribosomes during protein biosynthesis. The sequence is that of Elongation factor Tu, chloroplastic (tufA) from Chara connivens (Convergent stonewort).